The primary structure comprises 295 residues: Fatty acid desaturase 4-like 1, chloroplastic (295 aa).

The transit peptide at 1 to 29 (MAVSFQTKNPLRPITNIPRSYGPTRVRVT) directs the protein to the chloroplast. Transmembrane regions (helical) follow at residues 72–92 (WVAA…IGGF), 102–122 (LACY…HWAI), and 175–195 (LAIN…CILL).

This sequence belongs to the fatty acid desaturase CarF family.

It localises to the plastid. The protein localises to the chloroplast membrane. It participates in lipid metabolism; fatty acid metabolism. Fatty acid desaturase involved in the production of chloroplast-specific phosphatidylglycerol molecular species. Catalyzes the formation of a trans double bond introduced close to the carboxyl group of palmitic acid, which is specifically esterified to the sn-2 glyceryl carbon of phosphatidylglycerol. In Arabidopsis thaliana (Mouse-ear cress), this protein is Fatty acid desaturase 4-like 1, chloroplastic (FAD4L1).